Here is a 578-residue protein sequence, read N- to C-terminus: A-type ATP synthase subunit A (578 aa).

228–235 provides a ligand contact to ATP; the sequence is GPFGSGKT.

The protein belongs to the ATPase alpha/beta chains family. As to quaternary structure, has multiple subunits with at least A(3), B(3), C, D, E, F, H, I and proteolipid K(x).

Its subcellular location is the cell membrane. The enzyme catalyses ATP + H2O + 4 H(+)(in) = ADP + phosphate + 5 H(+)(out). Functionally, produces ATP from ADP in the presence of a proton gradient across the membrane. The archaeal alpha chain is a catalytic subunit. In terms of biological role, component of the A-type ATP synthase that produces ATP from ADP in the presence of a proton gradient across the membrane. The A chain is the catalytic subunit. The protein is A-type ATP synthase subunit A of Methanosarcina barkeri.